Consider the following 307-residue polypeptide: Ribonuclease Z (307 aa).

Residues His61, His63, Asp65, His66, His138, Asp207, and His265 each coordinate Zn(2+). Catalysis depends on Asp65, which acts as the Proton acceptor.

Belongs to the RNase Z family. As to quaternary structure, homodimer. Zn(2+) is required as a cofactor.

The catalysed reaction is Endonucleolytic cleavage of RNA, removing extra 3' nucleotides from tRNA precursor, generating 3' termini of tRNAs. A 3'-hydroxy group is left at the tRNA terminus and a 5'-phosphoryl group is left at the trailer molecule.. Its function is as follows. Zinc phosphodiesterase, which displays some tRNA 3'-processing endonuclease activity. Probably involved in tRNA maturation, by removing a 3'-trailer from precursor tRNA. In Methanothermobacter thermautotrophicus (strain ATCC 29096 / DSM 1053 / JCM 10044 / NBRC 100330 / Delta H) (Methanobacterium thermoautotrophicum), this protein is Ribonuclease Z.